A 427-amino-acid chain; its full sequence is Gamma-glutamyl phosphate reductase (427 aa).

It belongs to the gamma-glutamyl phosphate reductase family.

It is found in the cytoplasm. The catalysed reaction is L-glutamate 5-semialdehyde + phosphate + NADP(+) = L-glutamyl 5-phosphate + NADPH + H(+). It functions in the pathway amino-acid biosynthesis; L-proline biosynthesis; L-glutamate 5-semialdehyde from L-glutamate: step 2/2. Its function is as follows. Catalyzes the NADPH-dependent reduction of L-glutamate 5-phosphate into L-glutamate 5-semialdehyde and phosphate. The product spontaneously undergoes cyclization to form 1-pyrroline-5-carboxylate. The protein is Gamma-glutamyl phosphate reductase of Allorhizobium ampelinum (strain ATCC BAA-846 / DSM 112012 / S4) (Agrobacterium vitis (strain S4)).